The following is a 564-amino-acid chain: Dihydroxy-acid dehydratase (564 aa).

Position 80 (aspartate 80) interacts with Mg(2+). Position 121 (cysteine 121) interacts with [2Fe-2S] cluster. Residues aspartate 122 and lysine 123 each contribute to the Mg(2+) site. At lysine 123 the chain carries N6-carboxylysine. Cysteine 194 provides a ligand contact to [2Fe-2S] cluster. Position 447 (glutamate 447) interacts with Mg(2+). Serine 473 acts as the Proton acceptor in catalysis.

Belongs to the IlvD/Edd family. Homodimer. It depends on [2Fe-2S] cluster as a cofactor. Requires Mg(2+) as cofactor.

It catalyses the reaction (2R)-2,3-dihydroxy-3-methylbutanoate = 3-methyl-2-oxobutanoate + H2O. The catalysed reaction is (2R,3R)-2,3-dihydroxy-3-methylpentanoate = (S)-3-methyl-2-oxopentanoate + H2O. It participates in amino-acid biosynthesis; L-isoleucine biosynthesis; L-isoleucine from 2-oxobutanoate: step 3/4. The protein operates within amino-acid biosynthesis; L-valine biosynthesis; L-valine from pyruvate: step 3/4. Functions in the biosynthesis of branched-chain amino acids. Catalyzes the dehydration of (2R,3R)-2,3-dihydroxy-3-methylpentanoate (2,3-dihydroxy-3-methylvalerate) into 2-oxo-3-methylpentanoate (2-oxo-3-methylvalerate) and of (2R)-2,3-dihydroxy-3-methylbutanoate (2,3-dihydroxyisovalerate) into 2-oxo-3-methylbutanoate (2-oxoisovalerate), the penultimate precursor to L-isoleucine and L-valine, respectively. The sequence is that of Dihydroxy-acid dehydratase from Listeria monocytogenes serotype 4a (strain HCC23).